A 371-amino-acid polypeptide reads, in one-letter code: Cytochrome b (371 aa).

Transmembrane regions (helical) follow at residues 25–45 (FGSMLLTCSMIQVLTGFFLAV), 69–90 (WMVQNLHAIGASMFFICIYIHI), 105–125 (WLSGTTLLIMLMATAFFGYVL), and 170–190 (FFALHFILPFGIISLSSLHVL). Heme b is bound by residues His75 and His89. His174 and His188 together coordinate heme b. His193 provides a ligand contact to a ubiquinone. Helical transmembrane passes span 218 to 238 (MKDLLMLTTTLTLLLMTISFF), 280 to 300 (LGGALALAMSIMILFTVPFIH), 312 to 332 (LMQLMFWTFTSTFVLITWAAT), and 339 to 358 (FISISQVASIIYFTFFISNP).

This sequence belongs to the cytochrome b family. As to quaternary structure, the cytochrome bc1 complex contains 3 respiratory subunits (MT-CYB, CYC1 and UQCRFS1), 2 core proteins (UQCRC1 and UQCRC2) and probably 6 low-molecular weight proteins. The cofactor is heme b.

The protein localises to the mitochondrion inner membrane. Functionally, component of the ubiquinol-cytochrome c reductase complex (complex III or cytochrome b-c1 complex) that is part of the mitochondrial respiratory chain. The b-c1 complex mediates electron transfer from ubiquinol to cytochrome c. Contributes to the generation of a proton gradient across the mitochondrial membrane that is then used for ATP synthesis. This Boa constrictor (Boa) protein is Cytochrome b (MT-CYB).